A 171-amino-acid polypeptide reads, in one-letter code: S-ribosylhomocysteine lyase (171 aa).

Positions 54, 58, and 128 each coordinate Fe cation.

It belongs to the LuxS family. As to quaternary structure, homodimer. It depends on Fe cation as a cofactor.

The enzyme catalyses S-(5-deoxy-D-ribos-5-yl)-L-homocysteine = (S)-4,5-dihydroxypentane-2,3-dione + L-homocysteine. Functionally, involved in the synthesis of autoinducer 2 (AI-2) which is secreted by bacteria and is used to communicate both the cell density and the metabolic potential of the environment. The regulation of gene expression in response to changes in cell density is called quorum sensing. Catalyzes the transformation of S-ribosylhomocysteine (RHC) to homocysteine (HC) and 4,5-dihydroxy-2,3-pentadione (DPD). The polypeptide is S-ribosylhomocysteine lyase (Escherichia coli (strain 55989 / EAEC)).